A 251-amino-acid chain; its full sequence is Probable transcriptional regulatory protein MRA_2631 (251 aa).

The protein belongs to the TACO1 family.

The protein localises to the cytoplasm. This Mycobacterium tuberculosis (strain ATCC 25177 / H37Ra) protein is Probable transcriptional regulatory protein MRA_2631.